A 199-amino-acid chain; its full sequence is MANVRARIELMVGQKSNIPAEMLSFEGLETEKEHVAVVFNQADKHQSTPLVRMHSECLTGDVFHSSRCDCGEQLEETINRMSESGGIILYLRQEGRGIGLYNKLDAYELQSQGMNTYEANNHLGFGDDLRDFKEAAQMLEALNISKIKLVTNNPKKIEDIKNYGIEIDEVVNTLAHVKQGNEHYLHSKAAHGHKLNFDK.

52-56 contacts GTP; that stretch reads RMHSE. Zn(2+) contacts are provided by Cys57, Cys68, and Cys70. GTP contacts are provided by residues Gln73, 94–96, and Thr116; that span reads EGR. Asp128 acts as the Proton acceptor in catalysis. Arg130 acts as the Nucleophile in catalysis. The GTP site is built by Thr151 and Lys156.

It belongs to the GTP cyclohydrolase II family. Zn(2+) is required as a cofactor.

It catalyses the reaction GTP + 4 H2O = 2,5-diamino-6-hydroxy-4-(5-phosphoribosylamino)-pyrimidine + formate + 2 phosphate + 3 H(+). Its pathway is cofactor biosynthesis; riboflavin biosynthesis; 5-amino-6-(D-ribitylamino)uracil from GTP: step 1/4. In terms of biological role, catalyzes the conversion of GTP to 2,5-diamino-6-ribosylamino-4(3H)-pyrimidinone 5'-phosphate (DARP), formate and pyrophosphate. This chain is GTP cyclohydrolase-2, found in Aliivibrio fischeri (strain MJ11) (Vibrio fischeri).